The chain runs to 245 residues: MGAQRMQRTLLSLVLRLLLLCTVATGKCSGKYHELLLQLQRQADLMQDPSTLLDPYIHLQGLHSPVLQEHCRERPGDFPSEDALWRLSRQDFLQTLNTTLGLILRMLSALQQDLPEAAHQQAEMNVRGFGNNIHCMAQLLRGSSDPKAAEPTQPGPGPTPLPPTPPSSTFQRKLRNCGFLRGYHRFMRTAGQVLRGWGERQGRSRRHSPCRALKRGARRTQPFPEIRRLAPRGQPPGSLWGAPAR.

Positions 1–26 (MGAQRMQRTLLSLVLRLLLLCTVATG) are cleaved as a signal peptide. Disulfide bonds link Cys-28–Cys-135 and Cys-71–Cys-177. N-linked (GlcNAc...) asparagine glycosylation is present at Asn-97. Disordered regions lie at residues 143–171 (SSDP…STFQ) and 197–245 (WGER…APAR). A compositionally biased stretch (pro residues) spans 153–166 (QPGPGPTPLPPTPP). The span at 203-218 (RSRRHSPCRALKRGAR) shows a compositional bias: basic residues. The propeptide occupies 207-245 (HSPCRALKRGARRTQPFPEIRRLAPRGQPPGSLWGAPAR).

It belongs to the LIF/OSM family. Post-translationally, propeptide processing is not important for receptor binding activity but may be important growth-inhibitory activity.

The protein resides in the secreted. Its function is as follows. Growth regulator. Inhibits the proliferation of a number of tumor cell lines. It regulates cytokine production, including IL-6, G-CSF and GM-CSF from endothelial cells. Uses both type I OSM receptor (heterodimers composed of LIFR and IL6ST) and type II OSM receptor (heterodimers composed of OSMR and IL6ST). Involved in the maturation of fetal hepatocytes, thereby promoting liver development and regeneration. The polypeptide is Oncostatin-M (OSM) (Bos taurus (Bovine)).